Reading from the N-terminus, the 357-residue chain is Phosphoribosylformylglycinamidine cyclo-ligase (357 aa).

This sequence belongs to the AIR synthase family.

It localises to the cytoplasm. It carries out the reaction 2-formamido-N(1)-(5-O-phospho-beta-D-ribosyl)acetamidine + ATP = 5-amino-1-(5-phospho-beta-D-ribosyl)imidazole + ADP + phosphate + H(+). It functions in the pathway purine metabolism; IMP biosynthesis via de novo pathway; 5-amino-1-(5-phospho-D-ribosyl)imidazole from N(2)-formyl-N(1)-(5-phospho-D-ribosyl)glycinamide: step 2/2. This is Phosphoribosylformylglycinamidine cyclo-ligase from Rhizobium rhizogenes (strain K84 / ATCC BAA-868) (Agrobacterium radiobacter).